We begin with the raw amino-acid sequence, 344 residues long: Glycerol-3-phosphate dehydrogenase [NAD(P)+] (344 aa).

Residues tryptophan 18, histidine 38, and lysine 115 each coordinate NADPH. Sn-glycerol 3-phosphate is bound by residues lysine 115, glycine 144, and threonine 146. Alanine 148 provides a ligand contact to NADPH. Sn-glycerol 3-phosphate-binding residues include lysine 199, aspartate 252, serine 262, arginine 263, and asparagine 264. Lysine 199 functions as the Proton acceptor in the catalytic mechanism. Arginine 263 lines the NADPH pocket. Positions 288 and 290 each coordinate NADPH.

The protein belongs to the NAD-dependent glycerol-3-phosphate dehydrogenase family.

Its subcellular location is the cytoplasm. The catalysed reaction is sn-glycerol 3-phosphate + NAD(+) = dihydroxyacetone phosphate + NADH + H(+). It catalyses the reaction sn-glycerol 3-phosphate + NADP(+) = dihydroxyacetone phosphate + NADPH + H(+). It functions in the pathway membrane lipid metabolism; glycerophospholipid metabolism. In terms of biological role, catalyzes the reduction of the glycolytic intermediate dihydroxyacetone phosphate (DHAP) to sn-glycerol 3-phosphate (G3P), the key precursor for phospholipid synthesis. The sequence is that of Glycerol-3-phosphate dehydrogenase [NAD(P)+] from Hydrogenovibrio crunogenus (strain DSM 25203 / XCL-2) (Thiomicrospira crunogena).